The primary structure comprises 600 residues: DNA primase (600 aa).

The CHC2-type zinc-finger motif lies at 38-62 (CPFHDEKTPSFIVYPTRGHYHCYGC). The Toprim domain maps to 253–333 (KRVILVEGQA…GIAVIVCRLP (81 aa)). The Mg(2+) site is built by Glu-259, Asp-304, and Asp-306.

Belongs to the DnaG primase family. Monomer. Interacts with DnaB. Zn(2+) serves as cofactor. It depends on Mg(2+) as a cofactor.

The enzyme catalyses ssDNA + n NTP = ssDNA/pppN(pN)n-1 hybrid + (n-1) diphosphate.. Functionally, RNA polymerase that catalyzes the synthesis of short RNA molecules used as primers for DNA polymerase during DNA replication. The chain is DNA primase from Chlamydia muridarum (strain MoPn / Nigg).